The chain runs to 316 residues: Ribosomal RNA small subunit methyltransferase H (316 aa).

S-adenosyl-L-methionine is bound by residues 35 to 37 (SGH), D55, F84, D105, and Q112.

Belongs to the methyltransferase superfamily. RsmH family.

It localises to the cytoplasm. The catalysed reaction is cytidine(1402) in 16S rRNA + S-adenosyl-L-methionine = N(4)-methylcytidine(1402) in 16S rRNA + S-adenosyl-L-homocysteine + H(+). Functionally, specifically methylates the N4 position of cytidine in position 1402 (C1402) of 16S rRNA. This Streptococcus pyogenes serotype M18 (strain MGAS8232) protein is Ribosomal RNA small subunit methyltransferase H.